Consider the following 276-residue polypeptide: Formamidopyrimidine-DNA glycosylase (276 aa).

Pro-2 (schiff-base intermediate with DNA) is an active-site residue. The active-site Proton donor is the Glu-3. Lys-58 functions as the Proton donor; for beta-elimination activity in the catalytic mechanism. DNA is bound by residues His-92, Arg-111, and Arg-153. The FPG-type zinc finger occupies 238–272 (TVYGRERQNCLNCSSTIIKTKHSGRSTFYCRTCQY). Catalysis depends on Arg-262, which acts as the Proton donor; for delta-elimination activity.

It belongs to the FPG family. In terms of assembly, monomer. The cofactor is Zn(2+).

It catalyses the reaction Hydrolysis of DNA containing ring-opened 7-methylguanine residues, releasing 2,6-diamino-4-hydroxy-5-(N-methyl)formamidopyrimidine.. It carries out the reaction 2'-deoxyribonucleotide-(2'-deoxyribose 5'-phosphate)-2'-deoxyribonucleotide-DNA = a 3'-end 2'-deoxyribonucleotide-(2,3-dehydro-2,3-deoxyribose 5'-phosphate)-DNA + a 5'-end 5'-phospho-2'-deoxyribonucleoside-DNA + H(+). Functionally, involved in base excision repair of DNA damaged by oxidation or by mutagenic agents. Acts as a DNA glycosylase that recognizes and removes damaged bases. Has a preference for oxidized purines, such as 7,8-dihydro-8-oxoguanine (8-oxoG). Has AP (apurinic/apyrimidinic) lyase activity and introduces nicks in the DNA strand. Cleaves the DNA backbone by beta-delta elimination to generate a single-strand break at the site of the removed base with both 3'- and 5'-phosphates. This chain is Formamidopyrimidine-DNA glycosylase, found in Rickettsia felis (strain ATCC VR-1525 / URRWXCal2) (Rickettsia azadi).